We begin with the raw amino-acid sequence, 302 residues long: L-threonate dehydrogenase (302 aa).

Residues 7–35 (FHVGIVGLGSMGMGAALSCVRAGLSTWGA) and Thr-102 each bind NAD(+). Residue Lys-178 is part of the active site. Lys-246 is an NAD(+) binding site.

The protein belongs to the HIBADH-related family. L-threonate dehydrogenase subfamily.

The enzyme catalyses L-threonate + NAD(+) = 2-dehydro-L-erythronate + NADH + H(+). Catalyzes oxidation of L-threonate to 2-oxo-tetronate. Can use either NAD(+) or NADP(+) as cosubstrate, with a preference for NAD(+). The protein is L-threonate dehydrogenase of Escherichia coli O6:H1 (strain CFT073 / ATCC 700928 / UPEC).